The sequence spans 375 residues: 23S rRNA (uracil(747)-C(5))-methyltransferase RlmC (375 aa).

Residues cysteine 3, cysteine 11, cysteine 14, and cysteine 87 each coordinate [4Fe-4S] cluster. Glutamine 212, phenylalanine 241, glutamate 262, and asparagine 307 together coordinate S-adenosyl-L-methionine. Cysteine 334 (nucleophile) is an active-site residue.

It belongs to the class I-like SAM-binding methyltransferase superfamily. RNA M5U methyltransferase family. RlmC subfamily.

The catalysed reaction is uridine(747) in 23S rRNA + S-adenosyl-L-methionine = 5-methyluridine(747) in 23S rRNA + S-adenosyl-L-homocysteine + H(+). In terms of biological role, catalyzes the formation of 5-methyl-uridine at position 747 (m5U747) in 23S rRNA. The protein is 23S rRNA (uracil(747)-C(5))-methyltransferase RlmC of Shigella boydii serotype 4 (strain Sb227).